Reading from the N-terminus, the 494-residue chain is Gabija protein GajB (494 aa).

A UvrD-like helicase ATP-binding domain is found at 1–229 (MSREQIIKDG…YHLTSNFRCC (229 aa)). ATP is bound at residue 17-24 (AGAGSGKT).

It belongs to the helicase family. As to quaternary structure, homodimer. Interacts with GajA; 2 GajB dimers dock at opposite sides of the GajA complex to form a 4:4 GajA-GajB assembly (GajAB). GajAB interacts with Bacillus phage Phi3T Gad1 protein; this interaction forms a 4:4:8 GajAB-Gad1 complex and leads to GajAB inhibition.

Its function is as follows. Component of antiviral defense system Gabija type I, composed of GajA and GajB. Expression of Gabija type I in B.subtilis (strain BEST7003) confers resistance to phages phi105, phi29, rho14, SpBeta and SBSphiC. Expression of Gabija type I in E.coli B (strain ATCC 11303) confers resistance to phage T7. May be a helicase or contribute to GajA activation. The sequence is that of Gabija protein GajB from Bacillus cereus (strain VD045).